Here is a 423-residue protein sequence, read N- to C-terminus: Phosphoribosylamine--glycine ligase (423 aa).

The region spanning 107–312 (KDLCARYGIP…LLPLLYAAAT (206 aa)) is the ATP-grasp domain. 133-193 (IREEGAPIVI…EAYLDGEEAS (61 aa)) provides a ligand contact to ATP. The Mg(2+) site is built by glutamate 282 and asparagine 284.

It belongs to the GARS family. Requires Mg(2+) as cofactor. Mn(2+) is required as a cofactor.

The catalysed reaction is 5-phospho-beta-D-ribosylamine + glycine + ATP = N(1)-(5-phospho-beta-D-ribosyl)glycinamide + ADP + phosphate + H(+). It functions in the pathway purine metabolism; IMP biosynthesis via de novo pathway; N(1)-(5-phospho-D-ribosyl)glycinamide from 5-phospho-alpha-D-ribose 1-diphosphate: step 2/2. This Rhizobium meliloti (strain 1021) (Ensifer meliloti) protein is Phosphoribosylamine--glycine ligase.